The following is a 149-amino-acid chain: Calmodulin (149 aa).

Residue A2 is modified to N-acetylalanine. EF-hand domains are found at residues 8–43 (EQIA…LGQN), 44–79 (PTEA…KMKE), 81–116 (DSEE…LGEK), and 117–149 (LTDD…MVSK). K14 carries the post-translational modification N6,N6-dimethyllysine. Ca(2+)-binding residues include D21, D23, D25, T27, E32, D57, D59, N61, T63, E68, D94, D96, N98, and E105. N6,N6,N6-trimethyllysine is present on K116. Ca(2+) contacts are provided by D130, D132, D134, H136, and E141.

This sequence belongs to the calmodulin family. In terms of processing, the pantophobiac mutant CAM2 is undermethylated on Lys-116.

Its function is as follows. Calmodulin mediates the control of a large number of enzymes, ion channels and other proteins by Ca(2+). Among the enzymes to be stimulated by the calmodulin-Ca(2+) complex are a number of protein kinases and phosphatases. This chain is Calmodulin (CAM), found in Paramecium tetraurelia.